Reading from the N-terminus, the 1162-residue chain is Isoleucine--tRNA ligase (1162 aa).

The 'HIGH' region signature appears at 50–60 (PSANGMPGIHH). The 'KMSKS' region signature appears at 710–714 (KMSKR). Lysine 713 is an ATP binding site.

The protein belongs to the class-I aminoacyl-tRNA synthetase family. IleS type 2 subfamily. Monomer. The cofactor is Zn(2+).

It is found in the cytoplasm. The enzyme catalyses tRNA(Ile) + L-isoleucine + ATP = L-isoleucyl-tRNA(Ile) + AMP + diphosphate. Functionally, catalyzes the attachment of isoleucine to tRNA(Ile). As IleRS can inadvertently accommodate and process structurally similar amino acids such as valine, to avoid such errors it has two additional distinct tRNA(Ile)-dependent editing activities. One activity is designated as 'pretransfer' editing and involves the hydrolysis of activated Val-AMP. The other activity is designated 'posttransfer' editing and involves deacylation of mischarged Val-tRNA(Ile). In Bacteroides thetaiotaomicron (strain ATCC 29148 / DSM 2079 / JCM 5827 / CCUG 10774 / NCTC 10582 / VPI-5482 / E50), this protein is Isoleucine--tRNA ligase.